The following is a 198-amino-acid chain: MSNLNNLTSKILNDAEEKKKYILAEAEAQKDKIISKKTNRAEADKEEIITKANIEAEVKKARIISNAKLSVRNDMLRAKQDVISKVFNEAIEKLQNLSNGDYKYYVISTLDSLELEGTEVIIINEKDKDIFSNEFLEALNKELESKGKKGSITLNMEGKFNGGFILDRNGIQINNTFEALINSLRGELEFEVNKVLFD.

It belongs to the V-ATPase E subunit family.

Its function is as follows. Produces ATP from ADP in the presence of a proton gradient across the membrane. This is V-type ATP synthase subunit E from Clostridium perfringens (strain SM101 / Type A).